The chain runs to 82 residues: Omega-conotoxin-like TxMKLT1-031 (82 aa).

A signal peptide spans 1–22 (MKLTCMMIVAVLFLTAWTLVMA). Residues 23–49 (DDSNNGLANLFSKSRDEMEDPEASKLE) constitute a propeptide that is removed on maturation. 3 disulfides stabilise this stretch: Cys-53/Cys-71, Cys-60/Cys-76, and Cys-70/Cys-81.

Belongs to the conotoxin O1 superfamily. In terms of tissue distribution, expressed by the venom duct.

Its subcellular location is the secreted. Omega-conotoxins act at presynaptic membranes, they bind and block voltage-gated calcium channels (Cav). This chain is Omega-conotoxin-like TxMKLT1-031, found in Conus textile (Cloth-of-gold cone).